A 217-amino-acid chain; its full sequence is Guanylate kinase (217 aa).

Residues 1–10 are compositionally biased toward low complexity; that stretch reads MAVSSTTLSS. A disordered region spans residues 1–30; that stretch reads MAVSSTTLSSPTPPECLQQQEAPRPPATRG. The region spanning 30–208 is the Guanylate kinase-like domain; it reads GRLVVLTGPS…ALQELEALLY (179 aa). 37-44 lines the ATP pocket; it reads GPSGVGKG.

This sequence belongs to the guanylate kinase family.

The protein localises to the cytoplasm. The enzyme catalyses GMP + ATP = GDP + ADP. It carries out the reaction dZMP + ATP = dZDP + ADP. The protein operates within purine metabolism. Essential for recycling GMP and indirectly, cGMP. Its function is as follows. (Microbial infection) Catalyzes the phosphorylation of dZMP to dZDP, when the bacterium is infected by a phage that produces the substrate for the synthesis of dZTP (2- amino-2'-deoxyadenosine 5'-triphosphate), which is then used by the phage as a DNA polymerase substrate. The sequence is that of Guanylate kinase from Synechococcus sp. (strain JA-3-3Ab) (Cyanobacteria bacterium Yellowstone A-Prime).